The following is a 136-amino-acid chain: Transcription antitermination protein NusB (136 aa).

It belongs to the NusB family.

Functionally, involved in transcription antitermination. Required for transcription of ribosomal RNA (rRNA) genes. Binds specifically to the boxA antiterminator sequence of the ribosomal RNA (rrn) operons. The protein is Transcription antitermination protein NusB of Salinispora arenicola (strain CNS-205).